Reading from the N-terminus, the 198-residue chain is Pyridoxine/pyridoxamine 5'-phosphate oxidase (198 aa).

Residues 47–52 (RMVLVK), 62–63 (FT), Arg68, Lys69, and Gln91 each bind FMN. Lys52 lines the substrate pocket. The substrate site is built by Tyr109, Arg113, and Ser117. FMN-binding positions include 126 to 127 (QS) and Trp171. 177–179 (RLH) provides a ligand contact to substrate. Arg181 contacts FMN.

It belongs to the pyridoxamine 5'-phosphate oxidase family. In terms of assembly, homodimer. The cofactor is FMN.

The enzyme catalyses pyridoxamine 5'-phosphate + O2 + H2O = pyridoxal 5'-phosphate + H2O2 + NH4(+). The catalysed reaction is pyridoxine 5'-phosphate + O2 = pyridoxal 5'-phosphate + H2O2. Its pathway is cofactor metabolism; pyridoxal 5'-phosphate salvage; pyridoxal 5'-phosphate from pyridoxamine 5'-phosphate: step 1/1. It participates in cofactor metabolism; pyridoxal 5'-phosphate salvage; pyridoxal 5'-phosphate from pyridoxine 5'-phosphate: step 1/1. Functionally, catalyzes the oxidation of either pyridoxine 5'-phosphate (PNP) or pyridoxamine 5'-phosphate (PMP) into pyridoxal 5'-phosphate (PLP). In Anaeromyxobacter dehalogenans (strain 2CP-C), this protein is Pyridoxine/pyridoxamine 5'-phosphate oxidase.